A 461-amino-acid chain; its full sequence is Inositol-trisphosphate 3-kinase A (461 aa).

A disordered region spans residues 1-29; it reads MTLPGGPTGMARPGGARPCSPGLERAPRR. A required for cytoskeleton location region spans residues 1–133; the sequence is MTLPGGPTGM…SVSSTGSSSL (133 aa). Residues R35, R55, and R62 each carry the omega-N-methylarginine modification. The interval 49–160 is disordered; the sequence is AAAGEPRARG…GNVQLEAGED (112 aa). Residues 118 to 134 show a composition bias toward low complexity; that stretch reads RRLSTSSVSSTGSSSLL. Phosphoserine is present on residues S137 and S197. Residues S197, K209, 249–251, and D262 contribute to the ATP site; that span reads QDL. Residues K264 and R285 each contribute to the substrate site. The segment at 287–295 is calmodulin-binding; that stretch reads DMYKKMLAV. Position 312-319 (312-319) interacts with substrate; that stretch reads KPRYMQWR. 2 residues coordinate ATP: K336 and D416. Substrate is bound at residue K419.

This sequence belongs to the inositol phosphokinase (IPK) family. As to expression, expressed in brain.

It is found in the cytoplasm. It localises to the cytoskeleton. It carries out the reaction 1D-myo-inositol 1,4,5-trisphosphate + ATP = 1D-myo-inositol 1,3,4,5-tetrakisphosphate + ADP + H(+). Activated by calcium/calmodulin. Catalyzes the phosphorylation of 1D-myo-inositol 1,4,5-trisphosphate (InsP3) into 1D-myo-inositol 1,3,4,5-tetrakisphosphate and participates to the regulation of calcium homeostasis. In Homo sapiens (Human), this protein is Inositol-trisphosphate 3-kinase A.